The chain runs to 148 residues: Urease accessory protein UreE (148 aa).

This sequence belongs to the UreE family.

It localises to the cytoplasm. Its function is as follows. Involved in urease metallocenter assembly. Binds nickel. Probably functions as a nickel donor during metallocenter assembly. The protein is Urease accessory protein UreE of Aliarcobacter butzleri (strain RM4018) (Arcobacter butzleri).